Reading from the N-terminus, the 239-residue chain is Ureidoacrylate amidohydrolase RutB (239 aa).

D35 functions as the Proton acceptor in the catalytic mechanism. The active site involves K144. Catalysis depends on C177, which acts as the Nucleophile.

Belongs to the isochorismatase family. RutB subfamily.

It catalyses the reaction (Z)-3-ureidoacrylate + H2O + H(+) = (Z)-3-aminoacrylate + NH4(+) + CO2. The catalysed reaction is (Z)-3-ureidoacrylate + H2O = (Z)-3-aminoacrylate + carbamate + H(+). The enzyme catalyses (Z)-2-methylureidoacrylate + H2O + H(+) = (Z)-2-methylaminoacrylate + NH4(+) + CO2. Hydrolyzes ureidoacrylate to form aminoacrylate and carbamate. The carbamate hydrolyzes spontaneously, thereby releasing one of the nitrogen atoms of the pyrimidine ring as ammonia and one of its carbon atoms as CO2. The protein is Ureidoacrylate amidohydrolase RutB of Caulobacter segnis (strain ATCC 21756 / DSM 7131 / JCM 7823 / NBRC 15250 / LMG 17158 / TK0059) (Mycoplana segnis).